Reading from the N-terminus, the 495-residue chain is Alpha,alpha-trehalose-phosphate synthase [UDP-forming] 56 kDa subunit (495 aa).

The D-glucose 6-phosphate site is built by Y102 and D156. Residues R293 and K298 each contribute to the UDP site. Residues R293 and K298 each coordinate UDP-alpha-D-glucose. R331 serves as a coordination point for D-glucose 6-phosphate. UDP-binding positions include I370 and 396-400 (LVSYE). UDP-alpha-D-glucose-binding positions include I370 and 392-400 (DGMNLVSYE).

This sequence belongs to the glycosyltransferase 20 family. As to quaternary structure, the trehalose synthase complex is composed of the two catalytic subunits TPS1 and TPS2 and at least one of the two regulatory subunits TPS3 or TSL1.

The protein resides in the cytoplasm. It carries out the reaction D-glucose 6-phosphate + UDP-alpha-D-glucose = alpha,alpha-trehalose 6-phosphate + UDP + H(+). It participates in carbohydrate biosynthesis. Activated by fructose 6-phosphate. Inorganic phosphate inhibits the synthase activity in the complex, but activates the synthase activity in the free monomeric form. Functionally, synthase catalytic subunit of the trehalose synthase complex that catalyzes the production of trehalose from glucose-6-phosphate and UDP-alpha-D-glucose in a two step process. Can function independently of the complex. This chain is Alpha,alpha-trehalose-phosphate synthase [UDP-forming] 56 kDa subunit, found in Saccharomyces cerevisiae (strain ATCC 204508 / S288c) (Baker's yeast).